The following is a 194-amino-acid chain: Small ribosomal subunit protein uS5 (194 aa).

One can recognise an S5 DRBM domain in the interval 26–89 (LEEKVVEIRR…ADAKKHLIRV (64 aa)).

It belongs to the universal ribosomal protein uS5 family. In terms of assembly, part of the 30S ribosomal subunit. Contacts proteins S4 and S8.

In terms of biological role, with S4 and S12 plays an important role in translational accuracy. Functionally, located at the back of the 30S subunit body where it stabilizes the conformation of the head with respect to the body. The polypeptide is Small ribosomal subunit protein uS5 (Persephonella marina (strain DSM 14350 / EX-H1)).